Here is a 255-residue protein sequence, read N- to C-terminus: Ribonuclease HII (255 aa).

An RNase H type-2 domain is found at 72-255 (AIICGIDEVG…KSFEPIKSLL (184 aa)). A divalent metal cation is bound by residues aspartate 78, glutamate 79, and aspartate 170.

The protein belongs to the RNase HII family. Mn(2+) serves as cofactor. Requires Mg(2+) as cofactor.

The protein localises to the cytoplasm. The enzyme catalyses Endonucleolytic cleavage to 5'-phosphomonoester.. Its function is as follows. Endonuclease that specifically degrades the RNA of RNA-DNA hybrids. This chain is Ribonuclease HII, found in Staphylococcus aureus (strain bovine RF122 / ET3-1).